We begin with the raw amino-acid sequence, 640 residues long: 1,4-alpha-glucan branching enzyme GlgB (640 aa).

The Nucleophile role is filled by Asp-317. Glu-370 functions as the Proton donor in the catalytic mechanism.

It belongs to the glycosyl hydrolase 13 family. GlgB subfamily. In terms of assembly, monomer.

The catalysed reaction is Transfers a segment of a (1-&gt;4)-alpha-D-glucan chain to a primary hydroxy group in a similar glucan chain.. The protein operates within glycan biosynthesis; glycogen biosynthesis. Catalyzes the formation of the alpha-1,6-glucosidic linkages in glycogen by scission of a 1,4-alpha-linked oligosaccharide from growing alpha-1,4-glucan chains and the subsequent attachment of the oligosaccharide to the alpha-1,6 position. This Nitratidesulfovibrio vulgaris (strain ATCC 29579 / DSM 644 / CCUG 34227 / NCIMB 8303 / VKM B-1760 / Hildenborough) (Desulfovibrio vulgaris) protein is 1,4-alpha-glucan branching enzyme GlgB.